A 622-amino-acid polypeptide reads, in one-letter code: Low affinity potassium transport system protein Kup (622 aa).

Helical transmembrane passes span 9–29 (LPAV…TSPL), 49–69 (VFGF…LKYL), 101–121 (VLVI…VITP), 137–157 (PAMD…LFII), 165–185 (VGKL…VLGV), 212–232 (AVSF…EALY), 247–267 (WFTV…ALLL), 276–296 (PFFL…ATLA), 337–357 (IYIP…IVSF), 363–383 (LAAA…ILFC), 397–417 (AWVL…ANVV), and 419–439 (ILSG…IMTT).

The protein belongs to the HAK/KUP transporter (TC 2.A.72) family.

It is found in the cell inner membrane. It catalyses the reaction K(+)(in) + H(+)(in) = K(+)(out) + H(+)(out). In terms of biological role, responsible for the low-affinity transport of potassium into the cell. Likely operates as a K(+):H(+) symporter. This Pectobacterium atrosepticum (strain SCRI 1043 / ATCC BAA-672) (Erwinia carotovora subsp. atroseptica) protein is Low affinity potassium transport system protein Kup.